The following is a 492-amino-acid chain: Protein nucleotidyltransferase YdiU (492 aa).

Gly-88, Gly-90, Arg-91, Lys-111, Asp-123, Gly-124, Arg-174, and Arg-181 together coordinate ATP. The active-site Proton acceptor is the Asp-250. Residues Asn-251 and Asp-260 each contribute to the Mg(2+) site. Asp-260 serves as a coordination point for ATP.

It belongs to the SELO family. It depends on Mg(2+) as a cofactor. Requires Mn(2+) as cofactor.

It catalyses the reaction L-seryl-[protein] + ATP = 3-O-(5'-adenylyl)-L-seryl-[protein] + diphosphate. The catalysed reaction is L-threonyl-[protein] + ATP = 3-O-(5'-adenylyl)-L-threonyl-[protein] + diphosphate. It carries out the reaction L-tyrosyl-[protein] + ATP = O-(5'-adenylyl)-L-tyrosyl-[protein] + diphosphate. The enzyme catalyses L-histidyl-[protein] + UTP = N(tele)-(5'-uridylyl)-L-histidyl-[protein] + diphosphate. It catalyses the reaction L-seryl-[protein] + UTP = O-(5'-uridylyl)-L-seryl-[protein] + diphosphate. The catalysed reaction is L-tyrosyl-[protein] + UTP = O-(5'-uridylyl)-L-tyrosyl-[protein] + diphosphate. Its function is as follows. Nucleotidyltransferase involved in the post-translational modification of proteins. It can catalyze the addition of adenosine monophosphate (AMP) or uridine monophosphate (UMP) to a protein, resulting in modifications known as AMPylation and UMPylation. This chain is Protein nucleotidyltransferase YdiU, found in Rhodopseudomonas palustris (strain HaA2).